The chain runs to 233 residues: Aspartate/glutamate leucyltransferase (233 aa).

This sequence belongs to the R-transferase family. Bpt subfamily.

The protein localises to the cytoplasm. The enzyme catalyses N-terminal L-glutamyl-[protein] + L-leucyl-tRNA(Leu) = N-terminal L-leucyl-L-glutamyl-[protein] + tRNA(Leu) + H(+). It carries out the reaction N-terminal L-aspartyl-[protein] + L-leucyl-tRNA(Leu) = N-terminal L-leucyl-L-aspartyl-[protein] + tRNA(Leu) + H(+). In terms of biological role, functions in the N-end rule pathway of protein degradation where it conjugates Leu from its aminoacyl-tRNA to the N-termini of proteins containing an N-terminal aspartate or glutamate. This Vibrio cholerae serotype O1 (strain ATCC 39315 / El Tor Inaba N16961) protein is Aspartate/glutamate leucyltransferase.